A 206-amino-acid polypeptide reads, in one-letter code: Recombination protein RecR (206 aa).

The C4-type zinc finger occupies 58–73 (CENCHNISDVAVCEIC). Positions 81-176 (QIVCVVEDVR…ITSSIARGIS (96 aa)) constitute a Toprim domain.

The protein belongs to the RecR family.

May play a role in DNA repair. It seems to be involved in an RecBC-independent recombinational process of DNA repair. It may act with RecF and RecO. This chain is Recombination protein RecR, found in Flavobacterium psychrophilum (strain ATCC 49511 / DSM 21280 / CIP 103535 / JIP02/86).